A 356-amino-acid chain; its full sequence is Glucan endo-1,3-beta-glucosidase, acidic isoform GL153 (356 aa).

Residues 1 to 29 form the signal peptide; sequence MALCIKNGFLAAALVLVGLLMCSIQMIGA. At Gln-30 the chain carries Pyrrolidone carboxylic acid. Asn-95 carries an N-linked (GlcNAc...) asparagine glycan. The active-site Proton donor is Glu-124. Residue Glu-264 is the Nucleophile of the active site.

The protein belongs to the glycosyl hydrolase 17 family. In terms of tissue distribution, is expressed primarily in epidermal cell of healthy plant, and following induction by ethylene, accumulates in mesophyll cells.

It localises to the secreted. It is found in the extracellular space. The enzyme catalyses Hydrolysis of (1-&gt;3)-beta-D-glucosidic linkages in (1-&gt;3)-beta-D-glucans.. Functionally, is thought to be an important plant defense-related product against fungal pathogens. In Nicotiana tabacum (Common tobacco), this protein is Glucan endo-1,3-beta-glucosidase, acidic isoform GL153 (GGL4).